Reading from the N-terminus, the 203-residue chain is Ribosome maturation factor RimP (203 aa).

The interval 184–203 (RRGSAPVEDEEGEGEAPTAH) is disordered.

This sequence belongs to the RimP family.

It localises to the cytoplasm. In terms of biological role, required for maturation of 30S ribosomal subunits. This Methylobacterium nodulans (strain LMG 21967 / CNCM I-2342 / ORS 2060) protein is Ribosome maturation factor RimP.